Here is a 156-residue protein sequence, read N- to C-terminus: dCTP deaminase (156 aa).

DCTP-binding positions include 79–84 (RSSLAR), aspartate 95, glutamine 124, and tyrosine 138.

The protein belongs to the dCTP deaminase family. As to quaternary structure, homotrimer.

It carries out the reaction dCTP + H2O + H(+) = dUTP + NH4(+). It participates in pyrimidine metabolism; dUMP biosynthesis; dUMP from dCTP (dUTP route): step 1/2. Catalyzes the deamination of dCTP to dUTP. The chain is dCTP deaminase from Pyrococcus horikoshii (strain ATCC 700860 / DSM 12428 / JCM 9974 / NBRC 100139 / OT-3).